The primary structure comprises 66 residues: MDWLAKYWWILVLVFLVGVLLNVIKDLKRIDHKKFLANKPELPPHRDFNDKWDDEDGWPKKDQPKK.

The helical transmembrane segment at L4 to I24 threads the bilayer. A disordered region spans residues K39–K66. The segment covering L42–K66 has biased composition (basic and acidic residues).

It belongs to the UPF0370 family.

The protein resides in the cell membrane. This is UPF0370 protein YpfN from Salmonella paratyphi B (strain ATCC BAA-1250 / SPB7).